The chain runs to 630 residues: 1-deoxy-D-xylulose-5-phosphate synthase (630 aa).

Thiamine diphosphate is bound by residues His87 and 128-130 (GHS). Asp159 is a binding site for Mg(2+). Thiamine diphosphate-binding positions include 160–161 (GA), Asn188, Phe295, and Glu377. Mg(2+) is bound at residue Asn188.

Belongs to the transketolase family. DXPS subfamily. Homodimer. Mg(2+) is required as a cofactor. Requires thiamine diphosphate as cofactor.

It catalyses the reaction D-glyceraldehyde 3-phosphate + pyruvate + H(+) = 1-deoxy-D-xylulose 5-phosphate + CO2. It functions in the pathway metabolic intermediate biosynthesis; 1-deoxy-D-xylulose 5-phosphate biosynthesis; 1-deoxy-D-xylulose 5-phosphate from D-glyceraldehyde 3-phosphate and pyruvate: step 1/1. Catalyzes the acyloin condensation reaction between C atoms 2 and 3 of pyruvate and glyceraldehyde 3-phosphate to yield 1-deoxy-D-xylulose-5-phosphate (DXP). This is 1-deoxy-D-xylulose-5-phosphate synthase from Pseudomonas syringae pv. syringae (strain B728a).